The chain runs to 385 residues: Glucans biosynthesis protein C (385 aa).

10 helical membrane-spanning segments follow: residues 17-37 (AWLMLLGIPFHISLIYSSHTW), 60-80 (MQVFFVISGYFSYMLFLRYPL), 91-111 (VGIPMLTAIPLLTLPQFIMLQ), 137-157 (ISHLWFLLVLVVMTTLCVWIF), 173-193 (KFSMVKLSVIFLCLGIGYAVI), 212-232 (FIVMQTLFYLPFFILGALAFI), 239-259 (LFTTPSRGCTFAAALAFVAYL), 274-294 (TESVITMVLGLWMVNVVFSFG), 311-331 (ASLFIYLVHHPLTLFFGAYIT), and 338-358 (WLGFLCGLIFVVGIAIILYEI).

The protein belongs to the acyltransferase 3 family. OpgC subfamily.

It is found in the cell membrane. The protein operates within glycan metabolism; osmoregulated periplasmic glucan (OPG) biosynthesis. Its function is as follows. Necessary for the succinyl substitution of periplasmic glucans. Could catalyze the transfer of succinyl residues from the cytoplasmic side of the membrane to the nascent glucan backbones on the periplasmic side of the membrane. This is Glucans biosynthesis protein C from Escherichia coli O45:K1 (strain S88 / ExPEC).